A 366-amino-acid chain; its full sequence is Alanine racemase (366 aa).

Lys-40 acts as the Proton acceptor; specific for D-alanine in catalysis. At Lys-40 the chain carries N6-(pyridoxal phosphate)lysine. Residue Arg-136 coordinates substrate. Tyr-263 (proton acceptor; specific for L-alanine) is an active-site residue. Met-310 is a binding site for substrate.

The protein belongs to the alanine racemase family. It depends on pyridoxal 5'-phosphate as a cofactor.

It carries out the reaction L-alanine = D-alanine. The protein operates within amino-acid biosynthesis; D-alanine biosynthesis; D-alanine from L-alanine: step 1/1. Catalyzes the interconversion of L-alanine and D-alanine. May also act on other amino acids. This chain is Alanine racemase (alr), found in Streptococcus pyogenes serotype M6 (strain ATCC BAA-946 / MGAS10394).